We begin with the raw amino-acid sequence, 219 residues long: Ras-related protein Rab-3B (219 aa).

Position 2 is an N-acetylalanine (alanine 2). Positions 31, 32, 33, 34, 35, 36, 37, 49, and 53 each coordinate GTP. Threonine 36 is a binding site for Mg(2+). Residues 45–58 carry the Switch 1 motif; it reads DTFTPAFVSTVGID. Mg(2+)-binding residues include threonine 54 and aspartate 77. The short motif at 78–96 is the Switch 2 element; the sequence is TAGQERYRTITTAYYRGAM. GTP is bound at residue glycine 80. A Phosphothreonine modification is found at threonine 86. GTP-binding residues include asparagine 135, lysine 136, aspartate 138, alanine 166, and lysine 167. Serine 188 and serine 190 each carry phosphoserine. 2 S-geranylgeranyl cysteine lipidation sites follow: cysteine 217 and cysteine 219. Position 219 is a cysteine methyl ester (cysteine 219).

It belongs to the small GTPase superfamily. Rab family. In terms of assembly, interacts with RIMS1, RIMS2, RPH3A and RPH3AL. The GTP-bound form interacts with GAS8/DRC4 (via coiled-coil domains). Interacts with GDI2, CHM and CHML; phosphorylation at Thr-86 disrupts these interactions. Interacts with MADD (via uDENN domain); the GTP-bound form is preferred for interaction. Requires Mg(2+) as cofactor. Post-translationally, phosphorylation of Thr-86 in the switch II region by LRRK2 prevents the association of RAB regulatory proteins, including CHM, CHML and RAB GDP dissociation inhibitor GDI2.

It localises to the cell membrane. The protein resides in the golgi apparatus. The enzyme catalyses GTP + H2O = GDP + phosphate + H(+). Its activity is regulated as follows. Regulated by guanine nucleotide exchange factors (GEFs) which promote the exchange of bound GDP for free GTP. Regulated by GTPase activating proteins (GAPs) which increase the GTP hydrolysis activity. Inhibited by GDP dissociation inhibitors (GDIs) which prevent Rab-GDP dissociation. Functionally, the small GTPases Rab are key regulators of intracellular membrane trafficking, from the formation of transport vesicles to their fusion with membranes. Rabs cycle between an inactive GDP-bound form and an active GTP-bound form that is able to recruit to membranes different sets of downstream effectors directly responsible for vesicle formation, movement, tethering and fusion. In Mesocricetus auratus (Golden hamster), this protein is Ras-related protein Rab-3B (RAB3B).